Here is a 161-residue protein sequence, read N- to C-terminus: 3-isopropylmalate dehydratase small subunit (161 aa).

The protein belongs to the LeuD family. LeuD type 2 subfamily. Heterodimer of LeuC and LeuD.

It carries out the reaction (2R,3S)-3-isopropylmalate = (2S)-2-isopropylmalate. Its pathway is amino-acid biosynthesis; L-leucine biosynthesis; L-leucine from 3-methyl-2-oxobutanoate: step 2/4. Its function is as follows. Catalyzes the isomerization between 2-isopropylmalate and 3-isopropylmalate, via the formation of 2-isopropylmaleate. The chain is 3-isopropylmalate dehydratase small subunit from Clostridium botulinum (strain Eklund 17B / Type B).